A 337-amino-acid polypeptide reads, in one-letter code: uncharacterized protein (337 aa).

Belongs to the mimivirus R69 family.

This is an uncharacterized protein from Acanthamoeba polyphaga mimivirus (APMV).